A 71-amino-acid chain; its full sequence is Protein SlyX homolog (71 aa).

Residues 52–71 (RLDQAESSAGAPANERPPHY) form a disordered region.

This sequence belongs to the SlyX family.

The chain is Protein SlyX homolog from Rhodopseudomonas palustris (strain ATCC BAA-98 / CGA009).